The chain runs to 272 residues: uncharacterized protein (272 aa).

This is an uncharacterized protein from Bacillus subtilis (strain 168).